A 306-amino-acid chain; its full sequence is Ornithine carbamoyltransferase (306 aa).

Carbamoyl phosphate-binding positions include Ser-53–Thr-56, Gln-80, Arg-104, and His-131–Gln-134. L-ornithine is bound by residues Asn-162, Asp-219, and Ser-223–Met-224. Residues Cys-259–Leu-260 and Arg-287 contribute to the carbamoyl phosphate site.

The protein belongs to the aspartate/ornithine carbamoyltransferase superfamily. OTCase family.

The protein localises to the cytoplasm. The catalysed reaction is carbamoyl phosphate + L-ornithine = L-citrulline + phosphate + H(+). It functions in the pathway amino-acid biosynthesis; L-arginine biosynthesis; L-arginine from L-ornithine and carbamoyl phosphate: step 1/3. Functionally, reversibly catalyzes the transfer of the carbamoyl group from carbamoyl phosphate (CP) to the N(epsilon) atom of ornithine (ORN) to produce L-citrulline. In Acinetobacter baumannii (strain ATCC 17978 / DSM 105126 / CIP 53.77 / LMG 1025 / NCDC KC755 / 5377), this protein is Ornithine carbamoyltransferase.